A 1456-amino-acid polypeptide reads, in one-letter code: Sterol 3-beta-glucosyltransferase (1456 aa).

Residues 60-70 show a composition bias toward acidic residues; sequence ESDEEDGDEVE. 2 disordered regions span residues 60-113 and 128-156; these read ESDE…SISH and LSPHSLCHTSSHEASRRGSAEQPSRTQSE. Residues 71–104 show a composition bias toward low complexity; sequence TPSTTTTAVSPSATMSAPSPTATAPTPHSGTHTP. Residues 137–146 are compositionally biased toward basic and acidic residues; sequence SSHEASRRGS. Residues 200–247 enclose the GRAM 1 domain; that stretch reads QKLKGFAALDVDEQLIADYPVWLLKNVLIQGHLYITAKHMCFLSYLPR. The PH domain occupies 251–351; sequence ANIRSGTLVK…WVKALQKEIF (101 aa). 2 disordered regions span residues 462–512 and 524–776; these read HSAH…PRLP and DKCD…QDTF. The segment covering 496–508 has biased composition (basic and acidic residues); sequence QPHERDEKRDSKL. The span at 556-567 shows a compositional bias: polar residues; that stretch reads LASQRTSSSTLF. Composition is skewed to low complexity over residues 576-606 and 647-676; these read SQPTTPGVHAPGSSTPGGSYGTTTPGTPASA and GGATSSGAATGATTPGGAAAPGSTGNSSPG. The segment covering 677–696 has biased composition (gly residues); that stretch reads TPGGLGGPGAVGAGGPGVMG. Over residues 719–735 the composition is skewed to low complexity; the sequence is APHDPAAAAAAADAAAP. Residues 827 to 893 form the GRAM 2 domain; the sequence is ERFQKRFALG…KVVENATKDS (67 aa). UDP-alpha-D-glucose contacts are provided by serine 1004, arginine 1005, aspartate 1007, asparagine 1279, asparagine 1307, histidine 1310, histidine 1323, serine 1326, glycine 1327, threonine 1328, aspartate 1347, and glutamine 1348.

This sequence belongs to the glycosyltransferase 28 family.

The protein resides in the cytoplasm. It is found in the membrane. The catalysed reaction is a sterol + UDP-alpha-D-glucose = a sterol 3-beta-D-glucoside + UDP + H(+). The enzyme catalyses ergosterol + UDP-alpha-D-glucose = ergosteryl 3-beta-D-glucoside + UDP + H(+). Functionally, sterol glycosyltransferase responsible for the glycosylation of ergosterol to form ergosterol-glucoside. This Yarrowia lipolytica (strain CLIB 122 / E 150) (Yeast) protein is Sterol 3-beta-glucosyltransferase.